Consider the following 288-residue polypeptide: HTH-type transcriptional regulator CzcR (288 aa).

Positions 1-58 (MELRDLQIFQSVADQGSVSSAAKELNYVQSNVTTRIKQLENELKTPLFYRHKRGMTLT) constitute an HTH lysR-type domain. A DNA-binding region (H-T-H motif) is located at residues 18–37 (VSSAAKELNYVQSNVTTRIK).

This sequence belongs to the LysR transcriptional regulatory family.

In Bacillus thuringiensis subsp. konkukian (strain 97-27), this protein is HTH-type transcriptional regulator CzcR (czcR).